We begin with the raw amino-acid sequence, 83 residues long: Large ribosomal subunit protein bL31B (83 aa).

It belongs to the bacterial ribosomal protein bL31 family. Type B subfamily. Part of the 50S ribosomal subunit.

The sequence is that of Large ribosomal subunit protein bL31B from Levilactobacillus brevis (strain ATCC 367 / BCRC 12310 / CIP 105137 / JCM 1170 / LMG 11437 / NCIMB 947 / NCTC 947) (Lactobacillus brevis).